The sequence spans 1043 residues: Protein SLOW WALKER 2 (1043 aa).

4 disordered regions span residues 32–113 (SALP…SIDD), 444–469 (QGAD…VSTD), 632–737 (DIEH…GGYD), and 861–1043 (SKKK…KASE). The Nuclear localization signal 1 signature appears at 44–51 (FRKPAKSK). Residues 47 to 59 (PAKSKTQKRKKPK) are compositionally biased toward basic residues. Basic and acidic residues-rich tracts occupy residues 80 to 95 (EKGK…KDAP) and 444 to 466 (QGAD…KQEV). A Nuclear localization signal 2 motif is present at residues 441–448 (NRKQGADD). Residues 632–645 (DIEHFEDVIEGDDV) show a composition bias toward acidic residues. A compositionally biased stretch (basic and acidic residues) spans 646 to 673 (DPNKKAENDENVVEVDHDGVEKSSRDGD). Acidic residues-rich tracts occupy residues 688–699 (DEEDDNASDDSE) and 872–983 (EEAA…DSDG). The span at 988-1000 (SKKKKKEKRKRKS) shows a compositional bias: basic residues. Over residues 1006-1031 (EEYKHLIDQDEKEDSKTKRKATSEPT) the composition is skewed to basic and acidic residues. A Nuclear localization signal 3 motif is present at residues 1022–1029 (TKRKATSE). Basic residues predominate over residues 1032–1043 (KKKKKKKSKASE).

Belongs to the CBF/MAK21 family. In terms of assembly, interacts with RBL in both the nucleolus and nucleoplasm. Binds to NOC2. In terms of tissue distribution, mainly expressed in actively dividing tissues (e.g. root tips, lateral root primordia, shoot apices, young leaves, inflorescences and pollen grains) through the plant, including roots, stems, leaves, inflorescences, siliques and seedlings, and in gametophytes.

Its subcellular location is the nucleus. The protein localises to the nucleolus. In terms of biological role, together with NOC2, probably involved in pre-ribosome export from the nucleus to the cytoplasm. Required for coordinated cell cycle progression during female gametophyte and pollen development. The sequence is that of Protein SLOW WALKER 2 from Arabidopsis thaliana (Mouse-ear cress).